The following is a 221-amino-acid chain: Keratin-associated protein 10-3 (221 aa).

18 repeat units span residues 26–30, 31–35, 36–40, 57–61, 79–83, 89–93, 99–103, 104–108, 109–113, 114–118, 119–123, 124–128, 136–140, 146–150, 151–155, 177–181, 188–192, and 210–214. Positions 26 to 214 are 18 X 5 AA repeats of C-C-X(3); it reads CCEPPCCATS…RLSSACCGLS (189 aa).

This sequence belongs to the KRTAP type 10 family. As to quaternary structure, interacts with hair keratins. As to expression, restricted to a narrow region of the hair fiber cuticle, lying approximately 20 cell layers above the apex of the dermal papilla of the hair root; not detected in any other tissues.

Functionally, in the hair cortex, hair keratin intermediate filaments are embedded in an interfilamentous matrix, consisting of hair keratin-associated proteins (KRTAP), which are essential for the formation of a rigid and resistant hair shaft through their extensive disulfide bond cross-linking with abundant cysteine residues of hair keratins. The matrix proteins include the high-sulfur and high-glycine-tyrosine keratins. The protein is Keratin-associated protein 10-3 (KRTAP10-3) of Homo sapiens (Human).